The chain runs to 123 residues: Holo-[acyl-carrier-protein] synthase (123 aa).

The Mg(2+) site is built by Asp-8 and Glu-50.

The protein belongs to the P-Pant transferase superfamily. AcpS family. The cofactor is Mg(2+).

It is found in the cytoplasm. It carries out the reaction apo-[ACP] + CoA = holo-[ACP] + adenosine 3',5'-bisphosphate + H(+). Functionally, transfers the 4'-phosphopantetheine moiety from coenzyme A to a Ser of acyl-carrier-protein. The chain is Holo-[acyl-carrier-protein] synthase from Kocuria rhizophila (strain ATCC 9341 / DSM 348 / NBRC 103217 / DC2201).